The primary structure comprises 248 residues: Transcription factor Spi-C (248 aa).

Positions 111 to 194 form a DNA-binding region, ETS; sequence LRLFEYLHES…IRRKLTYQFS (84 aa).

The protein belongs to the ETS family. Binds DNA as a monomer.

The protein resides in the nucleus. Its function is as follows. Controls the development of red pulp macrophages required for red blood cells recycling and iron homeostasis. Transcription factor that binds to the PU-box, a purine-rich DNA sequence (5'-GAGGA[AT]-3') that can act as a lymphoid-specific enhancer. Regulates VCAM1 gene expression. The polypeptide is Transcription factor Spi-C (SPIC) (Bos taurus (Bovine)).